Reading from the N-terminus, the 243-residue chain is Uridylate kinase (243 aa).

12 to 15 (KLSG) is an ATP binding site. Residue G54 coordinates UMP. Residues G55 and R59 each coordinate ATP. 135 to 142 (TGNPYFTT) provides a ligand contact to UMP. Residues N163, Y169, and D172 each contribute to the ATP site.

The protein belongs to the UMP kinase family. In terms of assembly, homohexamer.

The protein resides in the cytoplasm. It carries out the reaction UMP + ATP = UDP + ADP. The protein operates within pyrimidine metabolism; CTP biosynthesis via de novo pathway; UDP from UMP (UMPK route): step 1/1. Its activity is regulated as follows. Inhibited by UTP. Its function is as follows. Catalyzes the reversible phosphorylation of UMP to UDP. The chain is Uridylate kinase from Roseiflexus sp. (strain RS-1).